Consider the following 185-residue polypeptide: Translation initiation factor IF-3 (185 aa).

Belongs to the IF-3 family. Monomer.

It is found in the cytoplasm. Its function is as follows. IF-3 binds to the 30S ribosomal subunit and shifts the equilibrium between 70S ribosomes and their 50S and 30S subunits in favor of the free subunits, thus enhancing the availability of 30S subunits on which protein synthesis initiation begins. The chain is Translation initiation factor IF-3 from Streptococcus pneumoniae (strain Hungary19A-6).